A 330-amino-acid polypeptide reads, in one-letter code: Aspartate--ammonia ligase (330 aa).

Belongs to the class-II aminoacyl-tRNA synthetase family. AsnA subfamily.

The protein localises to the cytoplasm. The enzyme catalyses L-aspartate + NH4(+) + ATP = L-asparagine + AMP + diphosphate + H(+). Its pathway is amino-acid biosynthesis; L-asparagine biosynthesis; L-asparagine from L-aspartate (ammonia route): step 1/1. The protein is Aspartate--ammonia ligase of Shigella flexneri serotype 5b (strain 8401).